The following is a 428-amino-acid chain: Glutamyl-tRNA reductase (428 aa).

Substrate-binding positions include 49 to 52, Ser109, 114 to 116, and Gln120; these read TCNR and EGQ. Cys50 (nucleophile) is an active-site residue. Residue 189 to 194 participates in NADP(+) binding; it reads GAGKMA.

Belongs to the glutamyl-tRNA reductase family. In terms of assembly, homodimer.

The catalysed reaction is (S)-4-amino-5-oxopentanoate + tRNA(Glu) + NADP(+) = L-glutamyl-tRNA(Glu) + NADPH + H(+). It functions in the pathway porphyrin-containing compound metabolism; protoporphyrin-IX biosynthesis; 5-aminolevulinate from L-glutamyl-tRNA(Glu): step 1/2. The protein operates within porphyrin-containing compound metabolism; chlorophyll biosynthesis. Catalyzes the NADPH-dependent reduction of glutamyl-tRNA(Glu) to glutamate 1-semialdehyde (GSA). The sequence is that of Glutamyl-tRNA reductase from Rippkaea orientalis (strain PCC 8801 / RF-1) (Cyanothece sp. (strain PCC 8801)).